The chain runs to 255 residues: 3-dehydroquinate dehydratase (255 aa).

3-dehydroquinate-binding positions include 47–49 and R83; that span reads EWR. The Proton donor/acceptor role is filled by H145. K172 acts as the Schiff-base intermediate with substrate in catalysis. 3-dehydroquinate contacts are provided by R215, S234, and Q238.

It belongs to the type-I 3-dehydroquinase family. As to quaternary structure, homodimer.

It catalyses the reaction 3-dehydroquinate = 3-dehydroshikimate + H2O. The protein operates within metabolic intermediate biosynthesis; chorismate biosynthesis; chorismate from D-erythrose 4-phosphate and phosphoenolpyruvate: step 3/7. Functionally, involved in the third step of the chorismate pathway, which leads to the biosynthesis of aromatic amino acids. Catalyzes the cis-dehydration of 3-dehydroquinate (DHQ) and introduces the first double bond of the aromatic ring to yield 3-dehydroshikimate. The polypeptide is 3-dehydroquinate dehydratase (Clostridium kluyveri (strain NBRC 12016)).